Consider the following 122-residue polypeptide: Small ribosomal subunit protein uS13 (122 aa).

A disordered region spans residues 94–122 (LSLPVRGQRTKTNSRTRKGKRKTVAGKKK). A compositionally biased stretch (basic residues) spans 101–122 (QRTKTNSRTRKGKRKTVAGKKK).

It belongs to the universal ribosomal protein uS13 family. Part of the 30S ribosomal subunit. Forms a loose heterodimer with protein S19. Forms two bridges to the 50S subunit in the 70S ribosome.

Functionally, located at the top of the head of the 30S subunit, it contacts several helices of the 16S rRNA. In the 70S ribosome it contacts the 23S rRNA (bridge B1a) and protein L5 of the 50S subunit (bridge B1b), connecting the 2 subunits; these bridges are implicated in subunit movement. Contacts the tRNAs in the A and P-sites. The protein is Small ribosomal subunit protein uS13 of Chlamydia muridarum (strain MoPn / Nigg).